A 173-amino-acid polypeptide reads, in one-letter code: 2-C-methyl-D-erythritol 2,4-cyclodiphosphate synthase (173 aa).

A divalent metal cation is bound by residues aspartate 17 and histidine 19. Residues 17-19 and 49-50 contribute to the 4-CDP-2-C-methyl-D-erythritol 2-phosphate site; these read DVH and HS. Residue histidine 57 participates in a divalent metal cation binding. Residues 76–80, 147–150, and arginine 157 contribute to the 4-CDP-2-C-methyl-D-erythritol 2-phosphate site; these read FPNTD and TTTE.

This sequence belongs to the IspF family. In terms of assembly, homotrimer. Requires a divalent metal cation as cofactor.

It catalyses the reaction 4-CDP-2-C-methyl-D-erythritol 2-phosphate = 2-C-methyl-D-erythritol 2,4-cyclic diphosphate + CMP. The protein operates within isoprenoid biosynthesis; isopentenyl diphosphate biosynthesis via DXP pathway; isopentenyl diphosphate from 1-deoxy-D-xylulose 5-phosphate: step 4/6. In terms of biological role, involved in the biosynthesis of isopentenyl diphosphate (IPP) and dimethylallyl diphosphate (DMAPP), two major building blocks of isoprenoid compounds. Catalyzes the conversion of 4-diphosphocytidyl-2-C-methyl-D-erythritol 2-phosphate (CDP-ME2P) to 2-C-methyl-D-erythritol 2,4-cyclodiphosphate (ME-CPP) with a corresponding release of cytidine 5-monophosphate (CMP). The sequence is that of 2-C-methyl-D-erythritol 2,4-cyclodiphosphate synthase from Ehrlichia ruminantium (strain Welgevonden).